Here is a 901-residue protein sequence, read N- to C-terminus: Probable inorganic carbon transporter subunit DabA (901 aa).

Residues C424, D426, H606, and C621 each contribute to the Zn(2+) site.

This sequence belongs to the inorganic carbon transporter (TC 9.A.2) DabA family. In terms of assembly, forms a complex with DabB. Zn(2+) serves as cofactor.

The protein localises to the cell membrane. Part of an energy-coupled inorganic carbon pump. The polypeptide is Probable inorganic carbon transporter subunit DabA (Staphylococcus aureus (strain USA300)).